The chain runs to 418 residues: Tyrosine--tRNA ligase (418 aa).

Tyrosine 34 is a binding site for L-tyrosine. The 'HIGH' region motif lies at 39 to 48 (PTADSLHLGH). L-tyrosine-binding residues include tyrosine 169 and glutamine 173. The short motif at 229–233 (KFGKS) is the 'KMSKS' region element. Lysine 232 serves as a coordination point for ATP. The S4 RNA-binding domain occupies 352-418 (HNIVELLVTA…GKKKYFVLTY (67 aa)).

Belongs to the class-I aminoacyl-tRNA synthetase family. TyrS type 1 subfamily. As to quaternary structure, homodimer.

The protein localises to the cytoplasm. It carries out the reaction tRNA(Tyr) + L-tyrosine + ATP = L-tyrosyl-tRNA(Tyr) + AMP + diphosphate + H(+). Functionally, catalyzes the attachment of tyrosine to tRNA(Tyr) in a two-step reaction: tyrosine is first activated by ATP to form Tyr-AMP and then transferred to the acceptor end of tRNA(Tyr). The protein is Tyrosine--tRNA ligase of Streptococcus mutans serotype c (strain ATCC 700610 / UA159).